Reading from the N-terminus, the 106-residue chain is Thioredoxin (106 aa).

The region spanning 2 to 106 (VNFLKTKADF…GLREKIKKNK (105 aa)) is the Thioredoxin domain. Catalysis depends on nucleophile residues cysteine 32 and cysteine 35. A disulfide bridge links cysteine 32 with cysteine 35.

This sequence belongs to the thioredoxin family.

Its subcellular location is the cytoplasm. Participates in various redox reactions through the reversible oxidation of its active center dithiol to a disulfide and catalyzes dithiol-disulfide exchange reactions. The protein is Thioredoxin (THIO) of Geodia cydonium (Sponge).